Reading from the N-terminus, the 510-residue chain is Cytochrome P450 monooxygenase AFLA_114810 (510 aa).

Positions 1-17 (MLILLGLLCLYTGLYVA) are cleaved as a signal peptide. C444 serves as a coordination point for heme.

The protein belongs to the cytochrome P450 family. It depends on heme as a cofactor.

It participates in secondary metabolite biosynthesis. Its function is as follows. Cytochrome P450 monooxygenase; part of the gene cluster 41 that mediates the biosynthesis of an extracellular and diffusible metabolite that is able to stimulate colony sclerotial production. This is Cytochrome P450 monooxygenase AFLA_114810 from Aspergillus flavus (strain ATCC 200026 / FGSC A1120 / IAM 13836 / NRRL 3357 / JCM 12722 / SRRC 167).